An 814-amino-acid polypeptide reads, in one-letter code: Rap guanine nucleotide exchange factor 5 (814 aa).

The DEP domain occupies 43-118; the sequence is LQAADLVKDR…DNYVFYQFSS (76 aa). One can recognise an N-terminal Ras-GEF domain in the interval 301-434; sequence ARYVVVSGTP…ELKEFQKILG (134 aa). The Ras-GEF domain maps to 578-813; sequence NTWDLALELM…FELSHRLEPR (236 aa).

The protein localises to the nucleus. Functionally, guanine nucleotide exchange factor (GEF) for RAP1A, RAP2A and MRAS/M-Ras-GTP. Its association with MRAS inhibits Rap1 activation. In Mus musculus (Mouse), this protein is Rap guanine nucleotide exchange factor 5 (Rapgef5).